The sequence spans 509 residues: GRAS family protein RAD1 (509 aa).

The region spanning 125–508 (EDGCADGMRL…KPIVAASCWK (384 aa)) is the GRAS domain. The interval 132 to 198 (MRLVQLLIAC…IQPIGSGAGV (67 aa)) is leucine repeat I (LRI). A VHIID region spans residues 217-286 (YRLVYETCPH…SGHGRVRRLR (70 aa)). Residues 248-252 (VHVVD) carry the VHIID motif. Positions 299–331 (AIGDELSDYANNLGINLEFSVVQKNLENLQPED) are leucine repeat II (LRII). The segment at 340 to 431 (LVVNSILQLH…QFYFAEEIKN (92 aa)) is PFYRE. Residues 434–508 (SCEGPLRMER…KPIVAASCWK (75 aa)) are SAW.

Belongs to the GRAS family. As to quaternary structure, interacts with RAM1 and NSP2. In terms of tissue distribution, expressed in roots under low phosphate (Pi) conditions.

Its subcellular location is the nucleus. In terms of biological role, transcription factor acting as a regulator of arbuscular mycorrhiza (AM)-related genes (e.g. PT4, STR and RAM2). Required for the morphogenesis of arbuscules upon symbiosis with AM fungi (e.g. Rhizophagus irregularis). Also involved in restricting mycorrhizal colonization of the root meristem. The protein is GRAS family protein RAD1 of Lotus japonicus (Lotus corniculatus var. japonicus).